We begin with the raw amino-acid sequence, 65 residues long: uncharacterized protein (65 aa).

2 helical membrane-spanning segments follow: residues Thr-4 to Pro-24 and Phe-45 to Gly-65.

Its subcellular location is the cell membrane. This is an uncharacterized protein from Escherichia coli O157:H7.